Consider the following 304-residue polypeptide: Polyisoprenyl-teichoic acid--peptidoglycan teichoic acid transferase TagU (304 aa).

Residues 1–4 (MKKK) are Cytoplasmic-facing. The helical; Signal-anchor for type II membrane protein transmembrane segment at 5 to 25 (ILFWILGIIGILIIGGGAYAY) threads the bilayer. At 26–304 (SIYSSVSKTL…KLRAHLEVTK (279 aa)) the chain is on the extracellular side.

The protein belongs to the LytR/CpsA/Psr (LCP) family.

It is found in the cell membrane. It functions in the pathway cell wall biogenesis. May catalyze the final step in cell wall teichoic acid biosynthesis, the transfer of the anionic cell wall polymers (APs) from their lipid-linked precursor to the cell wall peptidoglycan (PG). This chain is Polyisoprenyl-teichoic acid--peptidoglycan teichoic acid transferase TagU, found in Bacillus cereus (strain ATCC 14579 / DSM 31 / CCUG 7414 / JCM 2152 / NBRC 15305 / NCIMB 9373 / NCTC 2599 / NRRL B-3711).